A 407-amino-acid chain; its full sequence is Serine/threonine transporter SstT (407 aa).

The next 9 helical transmembrane spans lie at 12–32, 42–62, 81–101, 141–161, 179–199, 218–238, 245–267, 288–308, and 330–350; these read GNLI…GISS, LGIL…FILI, IIIL…LANF, ALSS…GIAL, VLKI…GLVA, ILLV…IVFF, FPLI…SSAA, ISIP…IAIL, and IIAT…LLLI.

It belongs to the dicarboxylate/amino acid:cation symporter (DAACS) (TC 2.A.23) family.

Its subcellular location is the cell inner membrane. It catalyses the reaction L-serine(in) + Na(+)(in) = L-serine(out) + Na(+)(out). The enzyme catalyses L-threonine(in) + Na(+)(in) = L-threonine(out) + Na(+)(out). Functionally, involved in the import of serine and threonine into the cell, with the concomitant import of sodium (symport system). The sequence is that of Serine/threonine transporter SstT from Campylobacter jejuni subsp. jejuni serotype O:6 (strain 81116 / NCTC 11828).